The primary structure comprises 88 residues: Small ribosomal subunit protein uS15 (88 aa).

The protein belongs to the universal ribosomal protein uS15 family. Part of the 30S ribosomal subunit. Forms a bridge to the 50S subunit in the 70S ribosome, contacting the 23S rRNA.

In terms of biological role, one of the primary rRNA binding proteins, it binds directly to 16S rRNA where it helps nucleate assembly of the platform of the 30S subunit by binding and bridging several RNA helices of the 16S rRNA. Its function is as follows. Forms an intersubunit bridge (bridge B4) with the 23S rRNA of the 50S subunit in the ribosome. In Borreliella burgdorferi (strain ATCC 35210 / DSM 4680 / CIP 102532 / B31) (Borrelia burgdorferi), this protein is Small ribosomal subunit protein uS15.